The sequence spans 419 residues: 3-isopropylmalate dehydratase large subunit (419 aa).

Cys300, Cys360, and Cys363 together coordinate [4Fe-4S] cluster.

It belongs to the aconitase/IPM isomerase family. LeuC type 2 subfamily. In terms of assembly, heterodimer of LeuC and LeuD. Requires [4Fe-4S] cluster as cofactor.

The enzyme catalyses (2R,3S)-3-isopropylmalate = (2S)-2-isopropylmalate. It functions in the pathway amino-acid biosynthesis; L-leucine biosynthesis; L-leucine from 3-methyl-2-oxobutanoate: step 2/4. Functionally, catalyzes the isomerization between 2-isopropylmalate and 3-isopropylmalate, via the formation of 2-isopropylmaleate. The polypeptide is 3-isopropylmalate dehydratase large subunit (Clostridium botulinum (strain Alaska E43 / Type E3)).